A 143-amino-acid chain; its full sequence is Large ribosomal subunit protein uL15 (143 aa).

The tract at residues 1–57 is disordered; the sequence is MQLNNLKPAAGSKHAKRRVGRGIGSGLGKTAGRGHKGQKSRSGGFHKVGFEGGQMPL. Residues 21–31 show a composition bias toward gly residues; sequence RGIGSGLGKTA.

The protein belongs to the universal ribosomal protein uL15 family. As to quaternary structure, part of the 50S ribosomal subunit.

In terms of biological role, binds to the 23S rRNA. The polypeptide is Large ribosomal subunit protein uL15 (Ralstonia nicotianae (strain ATCC BAA-1114 / GMI1000) (Ralstonia solanacearum)).